The sequence spans 346 residues: Partitioning defective 6 homolog alpha (346 aa).

The tract at residues 1 to 116 (MARPQRTPAR…SNSLQRRKKG (116 aa)) is interaction with PRKCI and PRKCZ. The PB1 domain occupies 15–95 (IVEVKSKFDA…PPLRLLVQKR (81 aa)). The interval 126–253 (RTRPPLLISL…VTVKPANQRN (128 aa)) is interaction with PARD3 and CDC42. Positions 133–150 (ISLPQDFRQVSSVIDVDL) constitute a Pseudo-CRIB domain. One can recognise a PDZ domain in the interval 157–250 (RVRLHKHGSD…NLIVTVKPAN (94 aa)). Disordered stretches follow at residues 257-294 (RGAS…HPPC) and 317-346 (GSSL…GFSL). Position 278 is a phosphoserine (S278). A compositionally biased stretch (polar residues) spans 317-332 (GSSLPSLDSREQANSG). S345 carries the post-translational modification Phosphoserine.

The protein belongs to the PAR6 family. In terms of assembly, interacts with PALS1 and CRB3. Interacts with PARD3. Interacts with GTP-bound forms of CDC42, RHOQ/TC10 and RAC1. Interacts with the N-terminal part of PRKCI and PRKCZ. Part of a complex with PARD3, CDC42 or RAC1 and PRKCI or PRKCZ. Part of a complex with LLGL1 and PRKCI. Interacts with MAP2K5. Interacts with TGFBR1; involved in TGF-beta induced epithelial to mesenchymal transition. Interacts with ECT2 ('Thr-359' phosphorylated form) and PRKCI. Interacts with DCTN1 and PCM1. Post-translationally, phosphorylated by the TGF-beta receptor. Ubiquitinated by the SCF(FBXO31) complex, leading to its proteasomal degradation.

Its subcellular location is the cytoplasm. It is found in the cell membrane. It localises to the cell junction. The protein localises to the tight junction. The protein resides in the cytoskeleton. Its subcellular location is the microtubule organizing center. It is found in the centrosome. It localises to the centriolar satellite. In terms of biological role, adapter protein involved in asymmetrical cell division and cell polarization processes. Probably involved in the formation of epithelial tight junctions. Association with PARD3 may prevent the interaction of PARD3 with F11R/JAM1, thereby preventing tight junction assembly. The PARD6-PARD3 complex links GTP-bound Rho small GTPases to atypical protein kinase C proteins. Regulates centrosome organization and function. Essential for the centrosomal recruitment of key proteins that control centrosomal microtubule organization. The chain is Partitioning defective 6 homolog alpha (Pard6a) from Rattus norvegicus (Rat).